Here is a 642-residue protein sequence, read N- to C-terminus: Chaperone protein DnaK (642 aa).

Threonine 199 bears the Phosphothreonine; by autocatalysis mark. Residues 570-585 (EELEQASKDGDKEAID) are compositionally biased toward basic and acidic residues. Residues 570 to 642 (EELEQASKDG…FEEVKDDDKK (73 aa)) are disordered. Residues 600–620 (EAAQQQQAQQGAEGAAGGEQQ) are compositionally biased toward low complexity. Positions 627–642 (DVVDAEFEEVKDDDKK) are enriched in acidic residues.

This sequence belongs to the heat shock protein 70 family.

In terms of biological role, acts as a chaperone. The chain is Chaperone protein DnaK from Idiomarina loihiensis (strain ATCC BAA-735 / DSM 15497 / L2-TR).